The primary structure comprises 1909 residues: Nck-associated protein 5 (1909 aa).

Residues 71–253 (EKLIHELEEE…DLEQQNRTLS (183 aa)) adopt a coiled-coil conformation. Disordered regions lie at residues 351 to 370 (SSYT…SQNW), 736 to 819 (EEDT…LMEP), 855 to 997 (PLFE…KKPS), 1026 to 1469 (SSSF…APLS), 1486 to 1509 (KGQV…FASW), 1541 to 1592 (GFGN…RTPQ), 1725 to 1750 (FPLP…DAEP), and 1763 to 1885 (SMRA…DYGD). The segment covering 736–748 (EEDTEKNIPKDNV) has biased composition (basic and acidic residues). Composition is skewed to polar residues over residues 753–789 (RVST…SRSS), 950–965 (APSS…SETA), 981–990 (VISSNPATTE), and 1066–1084 (PRIS…SKSV). Low complexity-rich tracts occupy residues 1110–1131 (SPSS…HNSP) and 1178–1187 (ASKSSVAVNK). Over residues 1241–1250 (DGRDGVDNRS) the composition is skewed to basic and acidic residues. The segment covering 1300–1325 (QIITNTAERGNSLTRQNSSTESSPNK) has biased composition (polar residues). The segment covering 1339 to 1366 (GRPSGHPSSGKGSLGSSGSFSSQHGSPS) has biased composition (low complexity). A compositionally biased stretch (polar residues) spans 1428–1446 (PGRTQHPSTFETSSTSKLE). The segment covering 1454 to 1466 (ASATATDAVSSEA) has biased composition (low complexity). 2 stretches are compositionally biased toward basic and acidic residues: residues 1547–1560 (LKSE…KPEL) and 1567–1576 (ELIKDTKSAD). A compositionally biased stretch (polar residues) spans 1869–1878 (YSASGGSNSD).

As to quaternary structure, interacts with the SH3-containing region of the adapter protein NCK. Expressed in fetal and adult brain, leukocytes and fetal fibroblasts.

This Homo sapiens (Human) protein is Nck-associated protein 5 (NCKAP5).